We begin with the raw amino-acid sequence, 117 residues long: G antigen 12J (117 aa).

Positions 1–117 (MSWRGRSTYY…PEEGEKQSQC (117 aa)) are disordered. Composition is skewed to acidic residues over residues 32 to 45 (FSDEVEPATPEEGE) and 87 to 96 (ECEDGPDGQE). The span at 103-117 (EEVKTPEEGEKQSQC) shows a compositional bias: basic and acidic residues.

The protein belongs to the GAGE family.

In Homo sapiens (Human), this protein is G antigen 12J (GAGE12J).